The sequence spans 489 residues: Para-nitrobenzyl esterase (489 aa).

The active-site Acyl-ester intermediate is Ser189. Position 189 is a phosphoserine (Ser189). Catalysis depends on charge relay system residues Glu310 and His399.

It belongs to the type-B carboxylesterase/lipase family. Monomer.

Its function is as follows. Catalyzes hydrolysis of several beta-lactam antibiotic PNB esters to the corresponding free acid and PNB alcohol. The sequence is that of Para-nitrobenzyl esterase (pnbA) from Bacillus subtilis (strain 168).